A 319-amino-acid chain; its full sequence is Thioredoxin reductase (319 aa).

An FAD-binding site is contributed by 36 to 43; it reads TGTNKGGQ. A disulfide bridge links Cys-136 with Cys-139. 288-297 serves as a coordination point for FAD; that stretch reads DVIDHVYRQA.

It belongs to the class-II pyridine nucleotide-disulfide oxidoreductase family. In terms of assembly, homodimer. It depends on FAD as a cofactor.

The protein localises to the cytoplasm. It carries out the reaction [thioredoxin]-dithiol + NADP(+) = [thioredoxin]-disulfide + NADPH + H(+). The polypeptide is Thioredoxin reductase (trxB) (Buchnera aphidicola subsp. Acyrthosiphon pisum (strain APS) (Acyrthosiphon pisum symbiotic bacterium)).